We begin with the raw amino-acid sequence, 210 residues long: NAD(P)H-quinone oxidoreductase subunit I (210 aa).

2 consecutive 4Fe-4S ferredoxin-type domains span residues 54–83 and 94–123; these read GRIHFEFDKCIACEICVRVCPIDLPVVDWV and YSYSIDFGVCIFCANCVEFCPTNCLSVTED. [4Fe-4S] cluster is bound by residues Cys63, Cys66, Cys69, Cys73, Cys103, Cys106, Cys109, and Cys113.

Belongs to the complex I 23 kDa subunit family. NDH-1 is composed of at least 11 different subunits. Requires [4Fe-4S] cluster as cofactor.

The protein localises to the cellular thylakoid membrane. The catalysed reaction is a plastoquinone + NADH + (n+1) H(+)(in) = a plastoquinol + NAD(+) + n H(+)(out). It catalyses the reaction a plastoquinone + NADPH + (n+1) H(+)(in) = a plastoquinol + NADP(+) + n H(+)(out). Its function is as follows. NDH-1 shuttles electrons from an unknown electron donor, via FMN and iron-sulfur (Fe-S) centers, to quinones in the respiratory and/or the photosynthetic chain. The immediate electron acceptor for the enzyme in this species is believed to be plastoquinone. Couples the redox reaction to proton translocation, and thus conserves the redox energy in a proton gradient. This Synechococcus sp. (strain JA-3-3Ab) (Cyanobacteria bacterium Yellowstone A-Prime) protein is NAD(P)H-quinone oxidoreductase subunit I.